A 420-amino-acid polypeptide reads, in one-letter code: Putative movement protein (420 aa).

2 stretches are compositionally biased toward low complexity: residues 1–18 and 30–59; these read MPLT…TSFS and TSCS…GSCP. 6 disordered regions span residues 1 to 77, 137 to 181, 195 to 219, 235 to 281, 327 to 370, and 396 to 420; these read MPLT…TARP, SMSR…SARS, RPKT…STRT, IMSE…RPPP, PSAG…RPIQ, and LPPP…QPWP. The span at 60 to 69 shows a compositional bias: pro residues; sequence KTPPGTPPLP. Over residues 137-157 the composition is skewed to polar residues; the sequence is SMSRRATQPPTTRSRVRPSTG. The span at 158–181 shows a compositional bias: low complexity; that stretch reads SRPPVSPLVTSSSPSPFSTLSARS. Polar residues predominate over residues 253-263; the sequence is GLRSASLSTAG. Low complexity predominate over residues 327 to 348; the sequence is PSAGSSPFTPTVSGCSASTSSA.

Functionally, cell-to-cell movement. The polypeptide is Putative movement protein (Maize rayado fino virus (isolate Costa Rica/Guapiles) (MRFV)).